The sequence spans 270 residues: Putative serine acetyltransferase (270 aa).

The protein belongs to the transferase hexapeptide repeat family.

The protein localises to the cytoplasm. It is found in the nucleus. It catalyses the reaction L-serine + acetyl-CoA = O-acetyl-L-serine + CoA. The protein operates within amino-acid biosynthesis; L-cysteine biosynthesis; L-cysteine from L-serine: step 1/2. The sequence is that of Putative serine acetyltransferase from Schizosaccharomyces pombe (strain 972 / ATCC 24843) (Fission yeast).